Consider the following 175-residue polypeptide: MPVNPVVLGTISSAYGISGWLNIISFTQNAASIFEYQPWFIKKLNTWLDVILDEWKYNYHNKLIIKINSIENREAAQLFANCNIIVDASQLPTLSDGDYYWKDLIGCQVETINSYQLGKVIDLIETGSNDVMVVQANQQHSTKINELLIPFIYGQVIKNVDLATHIIKVDWDPEF.

The PRC barrel domain maps to 96–175; the sequence is DGDYYWKDLI…IIKVDWDPEF (80 aa).

This sequence belongs to the RimM family. In terms of assembly, binds ribosomal protein uS19.

The protein resides in the cytoplasm. In terms of biological role, an accessory protein needed during the final step in the assembly of 30S ribosomal subunit, possibly for assembly of the head region. Essential for efficient processing of 16S rRNA. May be needed both before and after RbfA during the maturation of 16S rRNA. It has affinity for free ribosomal 30S subunits but not for 70S ribosomes. The chain is Ribosome maturation factor RimM from Baumannia cicadellinicola subsp. Homalodisca coagulata.